Here is a 196-residue protein sequence, read N- to C-terminus: Interleukin-23 subunit alpha (196 aa).

A signal peptide spans 1–21 (MLDCRAIILLWLLPWATQGLA).

This sequence belongs to the IL-6 superfamily. In terms of assembly, heterodimer with IL12B; disulfide-linked. The heterodimer is known as interleukin IL-23. Interacts with IL23R; this interaction enables recruitment of IL12RB1.

The protein resides in the secreted. Functionally, associates with IL12B to form the pro-inflammatory cytokine IL-23 that plays different roles in innate and adaptive immunity. Released by antigen-presenting cells such as dendritic cells or macrophages, binds to a heterodimeric receptor complex composed of IL12RB1 and IL23R to activate JAK2 and TYK2 which then phosphorylate the receptor to form a docking site leading to the phosphorylation of STAT3 and STAT4. This process leads to activation of several pathways including p38 MAPK or NF-kappa-B and promotes the production of pro-inflammatory cytokines such as interleukin-17A/IL17A. In turn, participates in the early and effective intracellular bacterial clearance. Promotes the expansion and survival of T-helper 17 cells, a CD4-positive helper T-cell subset that produces IL-17, as well as other IL-17-producing cells. The chain is Interleukin-23 subunit alpha (Il23a) from Rattus norvegicus (Rat).